We begin with the raw amino-acid sequence, 347 residues long: Chaperone protein DnaJ 1 (347 aa).

Residues 5–75 (DPHSLLGLSP…PAAAPHDAQA (71 aa)) form the J domain. A compositionally biased stretch (low complexity) spans 68 to 77 (AAPHDAQAAD). A disordered region spans residues 68–91 (AAPHDAQAADARPEPPPEAPPRGA). The CR-type zinc finger occupies 107 to 181 (GGEKAFTIAD…CHGSGQARAA (75 aa)). Zn(2+) contacts are provided by cysteine 120, cysteine 123, cysteine 137, cysteine 140, cysteine 155, cysteine 158, cysteine 169, and cysteine 172. CXXCXGXG motif repeat units lie at residues 120-127 (CGACGGSG), 137-144 (CATCHGSG), 155-162 (CADCAGRG), and 169-176 (CGACHGSG).

The protein belongs to the DnaJ family. As to quaternary structure, homodimer. The cofactor is Zn(2+).

The protein resides in the cytoplasm. Functionally, participates actively in the response to hyperosmotic and heat shock by preventing the aggregation of stress-denatured proteins and by disaggregating proteins, also in an autonomous, DnaK-independent fashion. Unfolded proteins bind initially to DnaJ; upon interaction with the DnaJ-bound protein, DnaK hydrolyzes its bound ATP, resulting in the formation of a stable complex. GrpE releases ADP from DnaK; ATP binding to DnaK triggers the release of the substrate protein, thus completing the reaction cycle. Several rounds of ATP-dependent interactions between DnaJ, DnaK and GrpE are required for fully efficient folding. Also involved, together with DnaK and GrpE, in the DNA replication of plasmids through activation of initiation proteins. The polypeptide is Chaperone protein DnaJ 1 (Aromatoleum aromaticum (strain DSM 19018 / LMG 30748 / EbN1) (Azoarcus sp. (strain EbN1))).